The chain runs to 291 residues: ATP synthase gamma chain (291 aa).

The protein belongs to the ATPase gamma chain family. As to quaternary structure, F-type ATPases have 2 components, CF(1) - the catalytic core - and CF(0) - the membrane proton channel. CF(1) has five subunits: alpha(3), beta(3), gamma(1), delta(1), epsilon(1). CF(0) has three main subunits: a, b and c.

The protein localises to the cell inner membrane. Produces ATP from ADP in the presence of a proton gradient across the membrane. The gamma chain is believed to be important in regulating ATPase activity and the flow of protons through the CF(0) complex. This Neisseria gonorrhoeae (strain ATCC 700825 / FA 1090) protein is ATP synthase gamma chain.